The chain runs to 829 residues: High affinity cAMP-specific and IBMX-insensitive 3',5'-cyclic phosphodiesterase 8A (829 aa).

The tract at residues 16–46 (EDAPSPAAPPLSSGGPRLPQGQKTAALPRTR) is disordered. Ser-20 is modified (phosphoserine). Residues 213–283 (ACNSVFTALE…DTINSCIRIG (71 aa)) form the PAS domain. Residues 287–329 (QGIYYAKKKNGDNIQQNVKIIPVIGQGGKIRHYVSIIRVCNGN) form the PAC domain. Residues 341–360 (SDTHTDNQTGKHKDRRKGSL) are disordered. A Phosphoserine; by PKA modification is found at Ser-359. Phosphoserine is present on residues Ser-386 and Ser-457. The involved in RAF1-binding stretch occupies residues 454-461 (RRLSGNEY). Tyr-461 is subject to Phosphotyrosine. One can recognise a PDEase domain in the interval 480 to 820 (SLDDVPPRIA…KYWKGLDEMK (341 aa)). Catalysis depends on His-556, which acts as the Proton donor. Positions 560, 596, 597, and 726 each coordinate a divalent metal cation.

It belongs to the cyclic nucleotide phosphodiesterase family. PDE8 subfamily. Interacts with RAF1. The interaction promotes RAF1 activity. A divalent metal cation serves as cofactor. Phosphorylated at Ser-359 by PKA under elevated cAMP conditions, this enhances catalytic activity. As to expression, expressed in most tissues except thymus and peripheral blood leukocytes. Highest levels in testis, ovary, small intestine and colon.

It catalyses the reaction 3',5'-cyclic AMP + H2O = AMP + H(+). Its pathway is purine metabolism; 3',5'-cyclic AMP degradation; AMP from 3',5'-cyclic AMP: step 1/1. Its activity is regulated as follows. Inhibited by dipyridimole. Insensitive to selective PDE inhibitors including rolipram and zaprinast as well as to the non-selective inhibitor, IBMX. Unaffected by cGMP. Functionally, hydrolyzes the second messenger cAMP, which is a key regulator of many important physiological processes. May be involved in maintaining basal levels of the cyclic nucleotide and/or in the cAMP regulation of germ cell development. Binding to RAF1 reduces RAF1 'Ser-259' inhibitory-phosphorylation and stimulates RAF1-dependent EGF-activated ERK-signaling. Protects against cell death induced by hydrogen peroxide and staurosporine. This chain is High affinity cAMP-specific and IBMX-insensitive 3',5'-cyclic phosphodiesterase 8A (PDE8A), found in Homo sapiens (Human).